A 518-amino-acid polypeptide reads, in one-letter code: Sodium-dependent glucose transporter 1 (518 aa).

12 helical membrane passes run 19 to 39 (TFQD…FIFV), 53 to 73 (GFLV…SATT), 82 to 102 (CKTA…IGIL), 107 to 127 (NVLI…ALHF), 139 to 159 (LAKL…SDFH), 221 to 241 (FRRA…FFFY), 307 to 327 (TSSL…IATS), 347 to 367 (YTTI…LGEM), 376 to 396 (LQGK…ASIA), 400 to 420 (LFPV…KEDR), 438 to 458 (EEEN…EMIE), and 466 to 486 (SIIE…YNQY). Residues 414 to 426 (RQRKEDRKSEDQK) show a composition bias toward basic and acidic residues. The disordered stretch occupies residues 414–448 (RQRKEDRKSEDQKALLSSSGLNEYEEENEEEDAEK). Over residues 436 to 448 (EYEEENEEEDAEK) the composition is skewed to acidic residues.

It belongs to the major facilitator superfamily.

Its subcellular location is the apical cell membrane. In terms of biological role, may function as a sodium-dependent glucose transporter. Potential channels for urea in the inner medulla of kidney. This is Sodium-dependent glucose transporter 1 from Homo sapiens (Human).